The chain runs to 265 residues: uncharacterized protein (265 aa).

Residues 143–205 are a coiled coil; sequence ATQKALKDSI…EKLIKSVEKA (63 aa).

This is an uncharacterized protein from Aquifex aeolicus (strain VF5).